A 487-amino-acid polypeptide reads, in one-letter code: MAEVGKVLASDMELDHSNETKAVDDVVATTDKAEVIPVAVTRTETVVESLESTDCKELEKLVPHTVASQSEVDVASPVSEKAPKVSESSGALSLQSGSEGNSPFIREKVMEDGYNWRKYGQKLVKGNEFVRSYYRCTHPNCKAKKQLERSAGGQVVDTVYFGEHDHPKPLAGAVPINQDKRSDVFTAVSKGEQRIDIVSLIYKLCIVSYDIMFVEKTSGSSVQTLRQTEPPKIHGGLHVSVIPPADDVKTDISQSSRITGDNTHKDYNSPTAKRRKKGGNIELSPVERSTNDSRIVVHTQTLFDIVNDGYRWRKYGQKSVKGSPYPRSYYRCSSPGCPVKKHVERSSHDTKLLITTYEGKHDHDMPPGRVVTHNNMLDSEVDDKEGDANKTPQSSTLQSITKDQHVEDHLRKKTKTNGFEKSLDQGPVLDEKLKEEIKERSDANKDHAANHAKPEAKSDDKTTVCQEKAVGTLESEEQKPKTEPAQS.

The segment at glutamine 69–phenylalanine 104 is disordered. Serine 76 is modified (phosphoserine). Polar residues predominate over residues serine 86–asparagine 101. Residues isoleucine 105 to proline 169 constitute a DNA-binding region (WRKY 1). Zn(2+) contacts are provided by cysteine 136, cysteine 141, histidine 164, and histidine 166. Residues serine 255–glutamate 287 form a disordered region. A Nuclear localization signal motif is present at residues lysine 273–lysine 277. A DNA-binding region (WRKY 2) is located at residues threonine 301 to proline 366. Cysteine 332, cysteine 337, histidine 361, and histidine 363 together coordinate Zn(2+). Residues glutamate 380 to serine 487 are disordered. Polar residues predominate over residues lysine 390–threonine 401. Composition is skewed to basic and acidic residues over residues leucine 429–threonine 462 and glutamate 476–serine 487.

The protein belongs to the WRKY group I family. As to expression, expressed to similar levels in root and flower, to a somewhat lower level in stem and to low levels in leaf and siliques.

The protein localises to the nucleus. Transcription factor. Binds to a 5'-CGTTGACCGAG-3' consensus core sequence which contains a W box, a frequently occurring elicitor-responsive cis-acting element. The sequence is that of WRKY transcription factor 1 from Arabidopsis thaliana (Mouse-ear cress).